A 125-amino-acid chain; its full sequence is Small ribosomal subunit protein uS13 (125 aa).

The segment at 91–125 (HRRGLPARGQRTRTNARTRKGKRKTVAGKKKAGKK) is disordered.

Belongs to the universal ribosomal protein uS13 family. Part of the 30S ribosomal subunit. Forms a loose heterodimer with protein S19. Forms two bridges to the 50S subunit in the 70S ribosome.

In terms of biological role, located at the top of the head of the 30S subunit, it contacts several helices of the 16S rRNA. In the 70S ribosome it contacts the 23S rRNA (bridge B1a) and protein L5 of the 50S subunit (bridge B1b), connecting the 2 subunits; these bridges are implicated in subunit movement. Contacts the tRNAs in the A and P-sites. The chain is Small ribosomal subunit protein uS13 from Chloroherpeton thalassium (strain ATCC 35110 / GB-78).